Reading from the N-terminus, the 339-residue chain is Dihydroorotase (339 aa).

Residues His12 and His14 each contribute to the Zn(2+) site. Substrate is bound by residues 14–16 (HVR) and Asn40. Lys94, His133, His167, and Asp239 together coordinate Zn(2+). Position 94 is an N6-carboxylysine (Lys94). Residue His133 participates in substrate binding. Asp239 is an active-site residue. His243 and Ala255 together coordinate substrate.

This sequence belongs to the metallo-dependent hydrolases superfamily. DHOase family. Class II DHOase subfamily. Homodimer. Requires Zn(2+) as cofactor.

The enzyme catalyses (S)-dihydroorotate + H2O = N-carbamoyl-L-aspartate + H(+). It participates in pyrimidine metabolism; UMP biosynthesis via de novo pathway; (S)-dihydroorotate from bicarbonate: step 3/3. Functionally, catalyzes the reversible cyclization of carbamoyl aspartate to dihydroorotate. The protein is Dihydroorotase of Helicobacter acinonychis (strain Sheeba).